The sequence spans 712 residues: Methylmalonyl-CoA mutase (712 aa).

Residues 73–77, 183–185, Arg-195, Lys-222, His-232, and 271–273 contribute to the substrate site; these read TVRQY, TIQ, and RLS. Positions 580-712 constitute a B12-binding domain; that stretch reads KPKIMVAKLG…DLIEGKRRNV (133 aa). His-593 is a binding site for adenosylcob(III)alamin.

It belongs to the methylmalonyl-CoA mutase family. Homodimer. It depends on adenosylcob(III)alamin as a cofactor. Requires a monovalent cation as cofactor.

It carries out the reaction (R)-methylmalonyl-CoA = succinyl-CoA. It participates in metabolic intermediate metabolism; propanoyl-CoA degradation; succinyl-CoA from propanoyl-CoA: step 3/3. In terms of biological role, radical enzyme that catalyzes the transformation of methylmalonyl-CoA to succinyl-CoA. Is required for growth on the polyhydroxyalkanoate degradation pathway intermediates 3-hydroxybutyrate and acetoacetate as sole carbon source. The chain is Methylmalonyl-CoA mutase from Rhizobium meliloti (strain 1021) (Ensifer meliloti).